The sequence spans 535 residues: Glutamate--cysteine ligase (535 aa).

It belongs to the glutamate--cysteine ligase type 1 family. Type 1 subfamily.

The catalysed reaction is L-cysteine + L-glutamate + ATP = gamma-L-glutamyl-L-cysteine + ADP + phosphate + H(+). The protein operates within sulfur metabolism; glutathione biosynthesis; glutathione from L-cysteine and L-glutamate: step 1/2. This Pseudomonas syringae pv. syringae protein is Glutamate--cysteine ligase.